A 485-amino-acid chain; its full sequence is Glutamyl-tRNA(Gln) amidotransferase subunit A (485 aa).

Catalysis depends on charge relay system residues K79 and S154. S178 functions as the Acyl-ester intermediate in the catalytic mechanism.

The protein belongs to the amidase family. GatA subfamily. Heterotrimer of A, B and C subunits.

The enzyme catalyses L-glutamyl-tRNA(Gln) + L-glutamine + ATP + H2O = L-glutaminyl-tRNA(Gln) + L-glutamate + ADP + phosphate + H(+). Its function is as follows. Allows the formation of correctly charged Gln-tRNA(Gln) through the transamidation of misacylated Glu-tRNA(Gln) in organisms which lack glutaminyl-tRNA synthetase. The reaction takes place in the presence of glutamine and ATP through an activated gamma-phospho-Glu-tRNA(Gln). This chain is Glutamyl-tRNA(Gln) amidotransferase subunit A, found in Clostridium botulinum (strain Langeland / NCTC 10281 / Type F).